Here is a 344-residue protein sequence, read N- to C-terminus: N-lysine methyltransferase KMT5A-A (344 aa).

Residues 143 to 176 (TSSKHRKPARRKVKRSTKRAAESKSPANRKVTDY) are disordered. A compositionally biased stretch (basic residues) spans 145-160 (SKHRKPARRKVKRSTK). The SET domain occupies 208–329 (DGMMVRFIEG…EGEELLYDYG (122 aa)). S-adenosyl-L-methionine contacts are provided by residues 218–220 (KGR), Tyr263, and 290–291 (NH).

Belongs to the class V-like SAM-binding methyltransferase superfamily. Histone-lysine methyltransferase family. PR/SET subfamily.

Its subcellular location is the nucleus. It is found in the chromosome. It carries out the reaction L-lysyl(20)-[histone H4] + S-adenosyl-L-methionine = N(6)-methyl-L-lysyl(20)-[histone H4] + S-adenosyl-L-homocysteine + H(+). It catalyses the reaction L-lysyl-[protein] + S-adenosyl-L-methionine = N(6)-methyl-L-lysyl-[protein] + S-adenosyl-L-homocysteine + H(+). Functionally, protein-lysine N-methyltransferase that monomethylates both histones and non-histone proteins. Specifically monomethylates 'Lys-20' of histone H4 (H4K20me1). H4K20me1 is enriched during mitosis and represents a specific tag for epigenetic transcriptional repression. Mainly functions in euchromatin regions, thereby playing a central role in the silencing of euchromatic genes. Required for cell proliferation, probably by contributing to the maintenance of proper higher-order structure of DNA during mitosis. Involved in chromosome condensation and proper cytokinesis. The protein is N-lysine methyltransferase KMT5A-A of Danio rerio (Zebrafish).